The sequence spans 354 residues: Guanine nucleotide-binding protein G(t) subunit alpha-2 (354 aa).

Residues 1–27 form a disordered region; the sequence is MGSGASAEDKELAKRSKELEKKLQEDA. The N-myristoyl glycine moiety is linked to residue Gly-2. The span at 7-27 shows a compositional bias: basic and acidic residues; sequence AEDKELAKRSKELEKKLQEDA. The G-alpha domain occupies 32–354; it reads KTVKLLLLGA…KENLKDCGLF (323 aa). The tract at residues 35 to 48 is G1 motif; sequence KLLLLGAGESGKST. Residues 40-47, 175-181, 200-204, 269-272, and Ala-326 each bind GTP; these read GAGESGKS, LRSRVKT, DVGGQ, and NKKD. A Mg(2+)-binding site is contributed by Ser-47. The G2 motif stretch occupies residues 173–181; sequence DVLRSRVKT. ADP-ribosylarginine; by cholera toxin is present on Arg-178. Position 181 (Thr-181) interacts with Mg(2+). Positions 196-205 are G3 motif; that stretch reads FRMFDVGGQR. Positions 265-272 are G4 motif; that stretch reads VLFLNKKD. The segment at 324-329 is G5 motif; sequence TCATDT. Position 351 is an ADP-ribosylcysteine; by pertussis toxin (Cys-351).

The protein belongs to the G-alpha family. G(i/o/t/z) subfamily. G proteins are composed of 3 units; alpha, beta and gamma. The alpha chain contains the guanine nucleotide binding site. In terms of tissue distribution, retinal rod outer segment.

Its subcellular location is the cell projection. It is found in the cilium. It localises to the photoreceptor outer segment. The protein resides in the photoreceptor inner segment. Guanine nucleotide-binding proteins (G proteins) are involved as modulators or transducers in various transmembrane signaling systems. Transducin is an amplifier and one of the transducers of a visual impulse that performs the coupling between rhodopsin and cGMP-phosphodiesterase. This is Guanine nucleotide-binding protein G(t) subunit alpha-2 (GNAT2) from Homo sapiens (Human).